Here is a 398-residue protein sequence, read N- to C-terminus: 4-hydroxy-3-methylbut-2-enyl diphosphate reductase (398 aa).

Position 66 (Cys66) interacts with [4Fe-4S] cluster. Position 96 (His96) interacts with (2E)-4-hydroxy-3-methylbut-2-enyl diphosphate. His96 contributes to the dimethylallyl diphosphate binding site. An isopentenyl diphosphate-binding site is contributed by His96. Cys157 is a binding site for [4Fe-4S] cluster. His185 is a (2E)-4-hydroxy-3-methylbut-2-enyl diphosphate binding site. His185 is a binding site for dimethylallyl diphosphate. His185 lines the isopentenyl diphosphate pocket. Glu187 (proton donor) is an active-site residue. Thr250 lines the (2E)-4-hydroxy-3-methylbut-2-enyl diphosphate pocket. Residue Cys288 participates in [4Fe-4S] cluster binding. Residues Ser317, Ser318, Asn319, and Ser380 each coordinate (2E)-4-hydroxy-3-methylbut-2-enyl diphosphate. Dimethylallyl diphosphate is bound by residues Ser317, Ser318, Asn319, and Ser380. Positions 317, 318, 319, and 380 each coordinate isopentenyl diphosphate.

The protein belongs to the IspH family. The cofactor is [4Fe-4S] cluster.

The catalysed reaction is isopentenyl diphosphate + 2 oxidized [2Fe-2S]-[ferredoxin] + H2O = (2E)-4-hydroxy-3-methylbut-2-enyl diphosphate + 2 reduced [2Fe-2S]-[ferredoxin] + 2 H(+). The enzyme catalyses dimethylallyl diphosphate + 2 oxidized [2Fe-2S]-[ferredoxin] + H2O = (2E)-4-hydroxy-3-methylbut-2-enyl diphosphate + 2 reduced [2Fe-2S]-[ferredoxin] + 2 H(+). It functions in the pathway isoprenoid biosynthesis; dimethylallyl diphosphate biosynthesis; dimethylallyl diphosphate from (2E)-4-hydroxy-3-methylbutenyl diphosphate: step 1/1. The protein operates within isoprenoid biosynthesis; isopentenyl diphosphate biosynthesis via DXP pathway; isopentenyl diphosphate from 1-deoxy-D-xylulose 5-phosphate: step 6/6. Functionally, catalyzes the conversion of 1-hydroxy-2-methyl-2-(E)-butenyl 4-diphosphate (HMBPP) into a mixture of isopentenyl diphosphate (IPP) and dimethylallyl diphosphate (DMAPP). Acts in the terminal step of the DOXP/MEP pathway for isoprenoid precursor biosynthesis. This chain is 4-hydroxy-3-methylbut-2-enyl diphosphate reductase, found in Prochlorococcus marinus (strain MIT 9515).